Reading from the N-terminus, the 488-residue chain is E3 ubiquitin-protein ligase TRIM39 (488 aa).

The RING-type zinc-finger motif lies at 29–70 (CSVCLEYLKEPVIIECGHNFCKACITRWWEDLERDFPCPVCR). The segment at 102–143 (RDESLCSQHHEPLSLFCYEDQEAVCLICAISHTHRPHTVVPM) adopts a B box-type zinc-finger fold. Zn(2+) contacts are provided by Cys-107, His-110, Cys-129, and His-135. Residues 181-250 (ELKRLVESRR…AHLAAEVEGK (70 aa)) adopt a coiled-coil conformation. Interaction with CDKN1A stretches follow at residues 268 to 307 (KCEK…QLIA) and 359 to 488 (TSGR…TDWE). A B30.2/SPRY domain is found at 289–484 (SNFPRQYFAL…NAAPLTIRPP (196 aa)).

This sequence belongs to the TRIM/RBCC family. Interacts with MOAP1. Interacts with CDKN1A. Autoubiquitinated.

The protein resides in the cytoplasm. It localises to the cytosol. The protein localises to the mitochondrion. Its subcellular location is the nucleus. It carries out the reaction S-ubiquitinyl-[E2 ubiquitin-conjugating enzyme]-L-cysteine + [acceptor protein]-L-lysine = [E2 ubiquitin-conjugating enzyme]-L-cysteine + N(6)-ubiquitinyl-[acceptor protein]-L-lysine.. Its pathway is protein modification; protein ubiquitination. E3 ubiquitin-protein ligase. May facilitate apoptosis by inhibiting APC/C-Cdh1-mediated poly-ubiquitination and subsequent proteasome-mediated degradation of the pro-apoptotic protein MOAP1. Regulates the G1/S transition of the cell cycle and DNA damage-induced G2 arrest by stabilizing CDKN1A/p21. Positively regulates CDKN1A/p21 stability by competing with DTL for CDKN1A/p21 binding, therefore disrupting DCX(DTL) E3 ubiquitin ligase complex-mediated CDKN1A/p21 ubiquitination and degradation. The chain is E3 ubiquitin-protein ligase TRIM39 (Trim39) from Mus musculus (Mouse).